A 375-amino-acid polypeptide reads, in one-letter code: Putative serine protease 47 (375 aa).

An N-terminal signal peptide occupies residues 1–23; it reads MGYCQGVSQVAVVLLMFPKEKEA. Positions 41–60 are disordered; that stretch reads DGQLPMGPHSRASQVAPETT. The segment covering 51–60 has biased composition (polar residues); sequence RASQVAPETT. Residues 81–323 form the Peptidase S1 domain; the sequence is IYGGRDAAAG…FINWIDEIMR (243 aa). Cysteines 106 and 122 form a disulfide. Residues His121 and Asp172 each act as charge relay system in the active site. Asn183 and Asn203 each carry an N-linked (GlcNAc...) asparagine glycan. Cys206 and Cys281 form a disulfide bridge. Catalysis depends on Ser275, which acts as the Charge relay system.

It belongs to the peptidase S1 family.

It is found in the secreted. The chain is Putative serine protease 47 (PRSS47P) from Homo sapiens (Human).